The following is a 240-amino-acid chain: Small ribosomal subunit protein uS3 (240 aa).

Residues 39–109 (IRQYIEKTLN…QIRVNVIEVP (71 aa)) enclose the KH type-2 domain. The tract at residues 219–240 (APPSQPRRKSRRQQFDDRSQDG) is disordered. The segment covering 231–240 (QQFDDRSQDG) has biased composition (basic and acidic residues).

This sequence belongs to the universal ribosomal protein uS3 family. As to quaternary structure, part of the 30S ribosomal subunit. Forms a tight complex with proteins S10 and S14.

Binds the lower part of the 30S subunit head. Binds mRNA in the 70S ribosome, positioning it for translation. This is Small ribosomal subunit protein uS3 from Synechocystis sp. (strain ATCC 27184 / PCC 6803 / Kazusa).